A 279-amino-acid chain; its full sequence is Tryptophan synthase alpha chain (279 aa).

Catalysis depends on proton acceptor residues E50 and D61.

This sequence belongs to the TrpA family. In terms of assembly, tetramer of two alpha and two beta chains.

It carries out the reaction (1S,2R)-1-C-(indol-3-yl)glycerol 3-phosphate + L-serine = D-glyceraldehyde 3-phosphate + L-tryptophan + H2O. The protein operates within amino-acid biosynthesis; L-tryptophan biosynthesis; L-tryptophan from chorismate: step 5/5. Functionally, the alpha subunit is responsible for the aldol cleavage of indoleglycerol phosphate to indole and glyceraldehyde 3-phosphate. This is Tryptophan synthase alpha chain from Brucella ovis (strain ATCC 25840 / 63/290 / NCTC 10512).